The sequence spans 563 residues: Probable lysosomal cobalamin transporter (563 aa).

Transmembrane regions (helical) follow at residues 8-28 (LIWF…SVFI), 40-60 (FVTF…MLLP), 95-115 (VIYY…IPFA), 144-164 (YTLA…FAPM), and 188-208 (AFTF…VFYT). N-linked (GlcNAc...) asparagine glycosylation is present at Asn-228. 4 helical membrane-spanning segments follow: residues 314-334 (GGFS…MTVI), 374-394 (IIFA…VVAV), 416-436 (MLLA…SVVM), and 506-526 (FGAL…VILV). Residues 537 to 563 (ERQLDEDAEEAEEESLLASTGRSGNPT) are disordered. A compositionally biased stretch (acidic residues) spans 539 to 551 (QLDEDAEEAEEES).

The protein belongs to the LIMR family. LMBRD1 subfamily.

Its subcellular location is the lysosome membrane. In terms of biological role, probable lysosomal cobalamin transporter. Required to export cobalamin from lysosomes allowing its conversion to cofactors. This Neosartorya fischeri (strain ATCC 1020 / DSM 3700 / CBS 544.65 / FGSC A1164 / JCM 1740 / NRRL 181 / WB 181) (Aspergillus fischerianus) protein is Probable lysosomal cobalamin transporter.